A 274-amino-acid polypeptide reads, in one-letter code: Thiamine kinase (274 aa).

Belongs to the thiamine kinase family.

The enzyme catalyses thiamine + ATP = thiamine phosphate + ADP + H(+). It functions in the pathway cofactor biosynthesis; thiamine diphosphate biosynthesis; thiamine phosphate from thiamine: step 1/1. Its function is as follows. Catalyzes the ATP-dependent phosphorylation of thiamine to thiamine phosphate. Is involved in thiamine salvage. This chain is Thiamine kinase, found in Escherichia coli O157:H7.